Here is an 85-residue protein sequence, read N- to C-terminus: Cell division topological specificity factor (85 aa).

Belongs to the MinE family.

Prevents the cell division inhibition by proteins MinC and MinD at internal division sites while permitting inhibition at polar sites. This ensures cell division at the proper site by restricting the formation of a division septum at the midpoint of the long axis of the cell. This is Cell division topological specificity factor from Stutzerimonas stutzeri (strain A1501) (Pseudomonas stutzeri).